The following is a 338-amino-acid chain: Inositol 2-dehydrogenase 3 (338 aa).

It belongs to the Gfo/Idh/MocA family. As to quaternary structure, homotetramer.

The enzyme catalyses myo-inositol + NAD(+) = scyllo-inosose + NADH + H(+). In terms of biological role, involved in the oxidation of myo-inositol (MI) to 2-keto-myo-inositol (2KMI or 2-inosose). The protein is Inositol 2-dehydrogenase 3 of Saccharopolyspora erythraea (strain ATCC 11635 / DSM 40517 / JCM 4748 / NBRC 13426 / NCIMB 8594 / NRRL 2338).